The following is a 912-amino-acid chain: Non-lysosomal glucosylceramidase (912 aa).

Positions 886 to 912 (HKKNSSRPAVTQGTAPSQPECGPKRSL) are disordered. A compositionally biased stretch (polar residues) spans 891–902 (SRPAVTQGTAPS).

This sequence belongs to the non-lysosomal glucosylceramidase family.

It is found in the endoplasmic reticulum membrane. Its subcellular location is the golgi apparatus membrane. It carries out the reaction a beta-D-glucosyl-(1&lt;-&gt;1')-N-acylsphing-4-enine + H2O = an N-acylsphing-4-enine + D-glucose. The enzyme catalyses a beta-D-galactosyl-(1&lt;-&gt;1')-N-acylsphing-4-enine + H2O = an N-acylsphing-4-enine + D-galactose. It catalyses the reaction beta-D-glucosyl-(1-&gt;3)-O-lithocholate + H2O = lithocholate + D-glucose. The catalysed reaction is beta-D-glucosyl-(1-&gt;3)-O-chenodeoxycholate + H2O = chenodeoxycholate + D-glucose. It carries out the reaction a di-trans,poly-cis-dolichyl beta-D-glucosyl phosphate + chenodeoxycholate = beta-D-glucosyl-(1-&gt;3)-O-chenodeoxycholate + a di-trans,poly-cis-dolichyl phosphate + H(+). The enzyme catalyses octyl beta-D-glucose + chenodeoxycholate = beta-D-glucosyl-(1-&gt;3)-O-chenodeoxycholate + octan-1-ol. It catalyses the reaction cholesteryl 3-beta-D-glucoside + H2O = cholesterol + D-glucose. The catalysed reaction is a beta-D-glucosyl-(1&lt;-&gt;1')-N-acylsphing-4-enine + cholesterol = cholesteryl 3-beta-D-glucoside + an N-acylsphing-4-enine. It carries out the reaction beta-D-glucosyl-N-(9Z-octadecenoyl)-sphing-4E-enine + cholesterol = N-(9Z-octadecenoyl)-sphing-4-enine + cholesteryl 3-beta-D-glucoside. The enzyme catalyses a beta-D-galactosyl-(1&lt;-&gt;1')-N-acylsphing-4-enine + cholesterol = cholesteryl 3-beta-D-galactoside + an N-acylsphing-4-enine. It catalyses the reaction 1-(beta-D-galactosyl)-N-dodecanoylsphing-4-enine + cholesterol = cholesteryl 3-beta-D-galactoside + N-dodecanoylsphing-4-enine. The protein operates within lipid metabolism; sphingolipid metabolism. Its pathway is steroid metabolism; cholesterol metabolism. Enzymatic activity is dependent on membrane association and requires the presence of lipids. Its function is as follows. Non-lysosomal glucosylceramidase that catalyzes the hydrolysis of glucosylceramides/GlcCers (such as beta-D-glucosyl-(1&lt;-&gt;1')-N-acylsphing-4-enine) to free glucose and ceramides (such as N-acylsphing-4-enine). GlcCers are membrane glycosphingolipids that have a wide intracellular distribution. They are the main precursors of more complex glycosphingolipids that play a role in cellular growth, differentiation, adhesion, signaling, cytoskeletal dynamics and membrane properties. Involved in the transglucosylation of cholesterol, transfers glucose from GlcCer to cholesterol, thereby modifying its water solubility and biological properties. Under specific conditions, may catalyze the reverse reaction, transferring glucose from cholesteryl-3-beta-D-glucoside to ceramide (such as N-acylsphing-4-enine). May play a role in the metabolism of bile acids. Able to hydrolyze bile acid 3-O-glucosides as well as to produce bile acid-glucose conjugates thanks to a bile acid glucosyl transferase activity. Catalyzes the hydrolysis of galactosylceramides/GalCers (such as beta-D-galactosyl-(1&lt;-&gt;1')-N-acylsphing-4-enine), as well as the galactosyl transfer between GalCers and cholesterol in vitro with lower activity compared with their activity against GlcCers. The protein is Non-lysosomal glucosylceramidase of Rattus norvegicus (Rat).